We begin with the raw amino-acid sequence, 699 residues long: MSRKTPIERYRNIGISAHIDAGKTTTTERILFYTGVNHKIGEVHDGAATMDWMEQEQERGITITSAATTCFWKGMAGKFEEHRINIIDTPGHVDFTIEVERSMRVLDGAVMVYDAVGGVQPQSETVWRQANKYKVPRLAFVNKMDRTGADFLRVRQMMVDRLKANPVVIQIPIGAEEHFQGIVDLVKMKAIIWDEDKGVTFTYGEIPANLTDVCNEYREKLVEAAAEASEELMNKYLEGGELSEEEIKKAIRQRTIAGEIQPMLCGSAFKNKGVQAMLDAVVEYMPAPTDIPPVNGTDEDEAPVTRKADDNEKFSALAFKLMTDPFVGQLTFVRVYSGVLTKGDSVYNPVRGKKERIGRIVQMHANNREEVNEIRAGDIAACVGLKEVTTGETLCDPAAVVTLERMVFPESVISQAVEPKTKADQEKMGIALQRLAQEDPSFRVKTDEESGQTIIAGMGELHLEIIVDRMKREFGVEANVGKPQVAYRETIRKTVEEAEGKFVRQSGGKGQYGHVVLKLEPQEAGKGFEFVDAIKGGVVPREYIPAVEKGVVEALTQGVLAGYPVVDVKVTLHFGSYHDVDSNEMAFKMAAIFGFKEGARKANPVILEPMMAVEVETPEDYAGNVMGDLSSRRGMVQGMDDMIGGGKSIKAEVPLSEMFGYSTTLRSMSQGRATYTMEFKHYAEAPRNVAEAIVAARAK.

In terms of domain architecture, tr-type G spans 8–289; that stretch reads ERYRNIGISA…AVVEYMPAPT (282 aa). Residues 17-24, 88-92, and 142-145 contribute to the GTP site; these read AHIDAGKT, DTPGH, and NKMD.

It belongs to the TRAFAC class translation factor GTPase superfamily. Classic translation factor GTPase family. EF-G/EF-2 subfamily.

It is found in the cytoplasm. In terms of biological role, catalyzes the GTP-dependent ribosomal translocation step during translation elongation. During this step, the ribosome changes from the pre-translocational (PRE) to the post-translocational (POST) state as the newly formed A-site-bound peptidyl-tRNA and P-site-bound deacylated tRNA move to the P and E sites, respectively. Catalyzes the coordinated movement of the two tRNA molecules, the mRNA and conformational changes in the ribosome. The chain is Elongation factor G from Variovorax paradoxus (strain S110).